Consider the following 400-residue polypeptide: Probable vacuolar protease A (400 aa).

Positions 1–18 (MKGSLLLAGATLLGCTSA) are cleaved as a signal peptide. Residues 19-72 (KLHSLKLKKVSLKEQLEHADIDVQIKSLGQKYMGIRPEQHEQQMFKEQTPIEVE) constitute a propeptide, activation peptide. The Peptidase A1 domain occupies 87-397 (YFSEISIGTP…DLGKGTVGLA (311 aa)). Aspartate 105 is an active-site residue. The cysteines at positions 118 and 123 are disulfide-linked. The N-linked (GlcNAc...) asparagine glycan is linked to asparagine 140. Residue aspartate 289 is part of the active site. The cysteines at positions 323 and 356 are disulfide-linked. N-linked (GlcNAc...) asparagine glycosylation is present at asparagine 340.

The protein belongs to the peptidase A1 family.

Its subcellular location is the vacuole lumen. It localises to the secreted. The catalysed reaction is Hydrolysis of proteins with broad specificity for peptide bonds. Cleaves -Leu-Leu-|-Val-Tyr- bond in a synthetic substrate. Does not act on esters of Tyr or Arg.. In terms of biological role, vacuolar aspartic endopeptidase which is probably also secreted and contributes to virulence. The sequence is that of Probable vacuolar protease A (PEP2) from Arthroderma benhamiae (strain ATCC MYA-4681 / CBS 112371) (Trichophyton mentagrophytes).